We begin with the raw amino-acid sequence, 201 residues long: Peptidyl-tRNA hydrolase (201 aa).

A tRNA-binding site is contributed by Y14. H19 functions as the Proton acceptor in the catalytic mechanism. Positions 64, 66, and 112 each coordinate tRNA.

Belongs to the PTH family. As to quaternary structure, monomer.

It is found in the cytoplasm. It catalyses the reaction an N-acyl-L-alpha-aminoacyl-tRNA + H2O = an N-acyl-L-amino acid + a tRNA + H(+). In terms of biological role, hydrolyzes ribosome-free peptidyl-tRNAs (with 1 or more amino acids incorporated), which drop off the ribosome during protein synthesis, or as a result of ribosome stalling. Its function is as follows. Catalyzes the release of premature peptidyl moieties from peptidyl-tRNA molecules trapped in stalled 50S ribosomal subunits, and thus maintains levels of free tRNAs and 50S ribosomes. This chain is Peptidyl-tRNA hydrolase, found in Rhodopseudomonas palustris (strain BisA53).